The sequence spans 731 residues: MSLSRCILGLACLWHGVIASPLGAVPSNIPIATDLQTAAETVAQPIANSARKLHGKFLHITDLHPDQFYKPHSSTDEADACHRGKGPAGVYGAEVSDCDSPFALINATFDWIAANVKDDIDFVIWTGDTARHDSDEGVPRNADQVLGTNRWIADKMAELFSDSTGRHLEIPIVPTLGNNDILPHNILLPGPNSWLQHYTHIWRRFVPEAQRHSFQFGGWFYVEVIPNRLAIFSLNTLYFFDRNAGTDGCASPSEPGYKQMEWLRIQLHIMRERGMKAILMGHVPPARTDSKKLWDENCWQKYSLWLRQYRDVVVSGVFGHMNIDHFFIHDERDINVGQLAGLADNSIDIREAMDDELSVTGAADYLRELRQNWAKLQPPPTDSKNSGQLKKGKKGRKGKKKKPDVWGERYSLSLVSPSIVPNYYPALRIVEYNISGLEDTPVWRDAAKDAMSIELEQNDRQKHLDLKRQHPSHMEDDDEIDAQKKKGKKHKGGDSKPKKPDFLIPHPPAKSSPPGPAYSPQPLTLTGYTQYFANLTHINNITTEASSALLDHDEEEETWVDWLLRWRKGRHGNRKPIHPKPDPREFQFEVEYSTFNDKLYKLRDLTVKNYVELAYRISKQPKKGKAKSIDVSYESAAEEEEEEEEEEEEDLFEEVEETDEEEEQEDDDLSDGEEVDDDSDEDELETETFKKHDKKKHKKKKGKKRQNKVWMHFLTHAFVSTVEKEDLKKFT.

Over M1–S4 the chain is Cytoplasmic. The helical; Signal-anchor for type II membrane protein transmembrane segment at R5–V25 threads the bilayer. Residues P26–T731 are Vacuolar-facing. N106 carries an N-linked (GlcNAc...) asparagine glycan. Residues K375–P403 form a disordered region. Basic residues predominate over residues K390–K402. N-linked (GlcNAc...) asparagine glycosylation is present at N433. The segment at E456 to P522 is disordered. Composition is skewed to basic and acidic residues over residues Q457–M474 and G492–D501. Residues P505–S519 show a composition bias toward pro residues. N-linked (GlcNAc...) asparagine glycosylation is found at N534 and N540. The tract at residues A626–Q706 is disordered. Acidic residues predominate over residues A636–T686. The span at K691–Q706 shows a compositional bias: basic residues.

It belongs to the endopolyphosphatase PPN1 family. The cofactor is a divalent metal cation. In terms of processing, processing by proteases in the vacuole may be required for activation.

The protein resides in the vacuole membrane. The enzyme catalyses [phosphate](n+1) + n H2O = (n+1) phosphate + n H(+). In terms of biological role, catalyzes the hydrolysis of inorganic polyphosphate (polyP) chains of many hundreds of phosphate residues into shorter lengths. The protein is Endopolyphosphatase (epp-1) of Neurospora crassa (strain ATCC 24698 / 74-OR23-1A / CBS 708.71 / DSM 1257 / FGSC 987).